The chain runs to 387 residues: D(4) dopamine receptor (387 aa).

At 1 to 34 the chain is on the extracellular side; that stretch reads MGNSSATEDGGLLAGRGPESLGTGAGLGGAGAAA. A glycan (N-linked (GlcNAc...) asparagine) is linked at N3. A helical transmembrane segment spans residues 35–57; the sequence is LVGGVLLIGLVLAGNSLVCVSVA. Topologically, residues 58–67 are cytoplasmic; sequence SERTLQTPTN. A helical transmembrane segment spans residues 68-90; that stretch reads YFIVSLAAADLLLAVLVLPLFVY. D77 is a binding site for Na(+). Residues 91 to 106 lie on the Extracellular side of the membrane; it reads SEVQGGVWLLSPRLCD. A disulfide bridge links C105 with C180. The helical transmembrane segment at 107–128 threads the bilayer; it reads TLMAMDVMLCTASIFNLCAISV. S119 lines the Na(+) pocket. Residues 129–146 lie on the Cytoplasmic side of the membrane; the sequence is DRFVAVTVPLRYNQQGQC. A helical membrane pass occupies residues 147 to 170; sequence QLLLIAATWLLSAAVASPVVCGLN. Residues 171 to 186 lie on the Extracellular side of the membrane; the sequence is DVPGRDPAVCCLENRD. The helical transmembrane segment at 187-208 threads the bilayer; that stretch reads YVVYSSVCSFFLPCPLMLLLYW. At 209–314 the chain is on the cytoplasmic side; that stretch reads ATFRGLRRWE…ITGRERKAMR (106 aa). 2 disordered regions span residues 224 to 247 and 287 to 306; these read KLHS…TQGP and AALP…AKIT. A helical transmembrane segment spans residues 315 to 337; it reads VLPVVVGAFLVCWTPFFVVHITR. The Extracellular portion of the chain corresponds to 338–346; sequence ALCPACFVS. Residues C340 and C343 are joined by a disulfide bond. A helical membrane pass occupies residues 347-369; that stretch reads PRLVSAVTWLGYVNSALNPIIYT. Topologically, residues 370–387 are cytoplasmic; that stretch reads IFNAEFRSVFRKTLRLRC. C387 is lipidated: S-palmitoyl cysteine.

This sequence belongs to the G-protein coupled receptor 1 family. As to quaternary structure, forms homo- and heterooligomers with DRD2. D4.7 allele exhibits higher affinity for homodimers compared to DRD2 heterodimers, while alleles D42. and 4.4 have similar affinities for both. The interaction with DRD2 may modulate agonist-induced downstream signaling. Interacts with CLIC6. Interacts with GPRASP1. May interact with ADORA2A. Interacts with KLHL12. In terms of processing, palmitoylated. Palmitoylation of the C-terminal Cys is important for normal expression at the cell membrane. As to expression, detected in olfactory bulb, hypothalamus, olfactory tubercle, brainstem and striatum.

It localises to the cell membrane. Dopamine receptor responsible for neuronal signaling in the mesolimbic system of the brain, an area of the brain that regulates emotion and complex behavior. Activated by dopamine, but also by epinephrine and norepinephrine, and by numerous synthetic agonists and drugs. Agonist binding triggers signaling via G proteins that inhibit adenylyl cyclase. Modulates the circadian rhythm of contrast sensitivity by regulating the rhythmic expression of NPAS2 in the retinal ganglion cells. This is D(4) dopamine receptor (Drd4) from Mus musculus (Mouse).